A 219-amino-acid polypeptide reads, in one-letter code: Orotate phosphoribosyltransferase (219 aa).

Lys-26 contributes to the 5-phospho-alpha-D-ribose 1-diphosphate binding site. Position 34–35 (34–35) interacts with orotate; sequence FF. 5-phospho-alpha-D-ribose 1-diphosphate contacts are provided by residues 72 to 73, Arg-102, Lys-103, Lys-106, His-108, and 128 to 136; these read YK and DDVITAGTA. The orotate site is built by Thr-132 and Arg-160.

This sequence belongs to the purine/pyrimidine phosphoribosyltransferase family. PyrE subfamily. As to quaternary structure, homodimer.

It catalyses the reaction orotidine 5'-phosphate + diphosphate = orotate + 5-phospho-alpha-D-ribose 1-diphosphate. The protein operates within pyrimidine metabolism; UMP biosynthesis via de novo pathway; UMP from orotate: step 1/2. Catalyzes the transfer of a ribosyl phosphate group from 5-phosphoribose 1-diphosphate to orotate, leading to the formation of orotidine monophosphate (OMP). This is Orotate phosphoribosyltransferase (URA5) from Yarrowia lipolytica (strain CLIB 122 / E 150) (Yeast).